A 1210-amino-acid chain; its full sequence is Microtubule-associated tumor suppressor 1 homolog (1210 aa).

Disordered regions lie at residues 1–21 (MNDD…IRDK), 370–404 (DPHI…PYEM), 446–482 (VENG…NTTV), 513–545 (QPKD…LTMM), and 585–618 (HSKN…AGSE). The span at 370–379 (DPHIDSHDND) shows a compositional bias: basic and acidic residues. Phosphoserine occurs at positions 375, 380, and 393. Over residues 381–398 (DIQSSTEELTLRSVSGQR) the composition is skewed to polar residues. The span at 446–455 (VENGPRDAKR) shows a compositional bias: basic and acidic residues. A compositionally biased stretch (polar residues) spans 473–482 (KSATKTNTTV). The span at 524–534 (PSPQVTGGSSP) shows a compositional bias: low complexity. Residues 585–605 (HSKNASLGVPRTTSATKSNQE) are compositionally biased toward polar residues. Phosphoserine is present on S621. The interval 683–771 (SKSLLVGSAP…YEEKPPKQAF (89 aa)) is disordered. Over residues 692-702 (PKTSTTPGRSS) the composition is skewed to polar residues. Residues 876–1171 (IQHLLSEREE…RLSMENEELL (296 aa)) adopt a coiled-coil conformation. 9 positions are modified to phosphoserine: S1143, S1164, S1185, S1195, S1199, S1201, S1203, S1204, and S1208. Residues 1177-1210 (GDLCSPKRSPTSSAIPFQSPRNSGSFSSPSISPR) form a disordered region. Over residues 1195–1210 (SPRNSGSFSSPSISPR) the composition is skewed to low complexity.

This sequence belongs to the MTUS1 family. In terms of assembly, homodimer. Interacts with AGTR2. Interacts with PTPN6. In terms of tissue distribution, ubiquitously expressed, with highest levels in uterus and adrenal gland.

Its subcellular location is the mitochondrion. The protein localises to the golgi apparatus. It is found in the cell membrane. It localises to the nucleus. Its function is as follows. Cooperates with AGTR2 to inhibit ERK2 activation and cell proliferation. May be required for AGTR2 cell surface expression. Together with PTPN6, induces UBE2V2 expression upon angiotensin-II stimulation. The chain is Microtubule-associated tumor suppressor 1 homolog (Mtus1) from Mus musculus (Mouse).